Consider the following 294-residue polypeptide: NAD kinase (294 aa).

Catalysis depends on Asp-73, which acts as the Proton acceptor. NAD(+)-binding positions include 73 to 74 (DG), 147 to 148 (NE), His-158, Arg-175, Asp-177, and 188 to 193 (TAYALS).

Belongs to the NAD kinase family. A divalent metal cation is required as a cofactor.

It localises to the cytoplasm. The enzyme catalyses NAD(+) + ATP = ADP + NADP(+) + H(+). Its function is as follows. Involved in the regulation of the intracellular balance of NAD and NADP, and is a key enzyme in the biosynthesis of NADP. Catalyzes specifically the phosphorylation on 2'-hydroxyl of the adenosine moiety of NAD to yield NADP. The polypeptide is NAD kinase (Tolumonas auensis (strain DSM 9187 / NBRC 110442 / TA 4)).